Consider the following 435-residue polypeptide: GTPase Obg (435 aa).

Residues 6 to 164 enclose the Obg domain; sequence ADFVDRVKIF…RWLELELKIL (159 aa). Positions 165–335 constitute an OBG-type G domain; it reads ADVGLVGYPN…LVSKLASIVR (171 aa). GTP contacts are provided by residues 171 to 178, 196 to 200, 217 to 220, 287 to 290, and 316 to 318; these read GYPNVGKS, FTTLI, DIPG, NKID, and SAV. The Mg(2+) site is built by serine 178 and threonine 198. Residues 357–435 form the OCT domain; it reads RRLPEKFHLE…IGDFEFEYRE (79 aa).

Belongs to the TRAFAC class OBG-HflX-like GTPase superfamily. OBG GTPase family. In terms of assembly, monomer. Mg(2+) is required as a cofactor.

It localises to the cytoplasm. Functionally, an essential GTPase which binds GTP, GDP and possibly (p)ppGpp with moderate affinity, with high nucleotide exchange rates and a fairly low GTP hydrolysis rate. Plays a role in control of the cell cycle, stress response, ribosome biogenesis and in those bacteria that undergo differentiation, in morphogenesis control. This chain is GTPase Obg, found in Thermotoga maritima (strain ATCC 43589 / DSM 3109 / JCM 10099 / NBRC 100826 / MSB8).